The sequence spans 876 residues: Alanine--tRNA ligase (876 aa).

Zn(2+) contacts are provided by His-560, His-564, Cys-662, and His-666.

Belongs to the class-II aminoacyl-tRNA synthetase family. Zn(2+) is required as a cofactor.

It localises to the cytoplasm. It catalyses the reaction tRNA(Ala) + L-alanine + ATP = L-alanyl-tRNA(Ala) + AMP + diphosphate. Functionally, catalyzes the attachment of alanine to tRNA(Ala) in a two-step reaction: alanine is first activated by ATP to form Ala-AMP and then transferred to the acceptor end of tRNA(Ala). Also edits incorrectly charged Ser-tRNA(Ala) and Gly-tRNA(Ala) via its editing domain. The chain is Alanine--tRNA ligase from Synechococcus elongatus (strain ATCC 33912 / PCC 7942 / FACHB-805) (Anacystis nidulans R2).